A 345-amino-acid polypeptide reads, in one-letter code: Aspartate--ammonia ligase (345 aa).

This sequence belongs to the class-II aminoacyl-tRNA synthetase family. AsnA subfamily.

The protein resides in the cytoplasm. The enzyme catalyses L-aspartate + NH4(+) + ATP = L-asparagine + AMP + diphosphate + H(+). Its pathway is amino-acid biosynthesis; L-asparagine biosynthesis; L-asparagine from L-aspartate (ammonia route): step 1/1. This is Aspartate--ammonia ligase from Bacteroides thetaiotaomicron (strain ATCC 29148 / DSM 2079 / JCM 5827 / CCUG 10774 / NCTC 10582 / VPI-5482 / E50).